The chain runs to 437 residues: Protein translocase subunit SecY (437 aa).

A run of 10 helical transmembrane segments spans residues 19–39 (LFTL…IPGV), 69–89 (LLQI…SIIL), 122–142 (VALA…GALF), 157–177 (IFTT…VMWL), 189–209 (GMSI…LWSI), 219–239 (WIEF…VVFV), 275–295 (GIIP…VVQF), 318–338 (HITV…AISF), 378–398 (GSLY…PLGA), and 400–420 (QNFP…LETV).

Belongs to the SecY/SEC61-alpha family. As to quaternary structure, component of the Sec protein translocase complex. Heterotrimer consisting of SecY, SecE and SecG subunits. The heterotrimers can form oligomers, although 1 heterotrimer is thought to be able to translocate proteins. Interacts with the ribosome. Interacts with SecDF, and other proteins may be involved. Interacts with SecA.

It is found in the cell membrane. Functionally, the central subunit of the protein translocation channel SecYEG. Consists of two halves formed by TMs 1-5 and 6-10. These two domains form a lateral gate at the front which open onto the bilayer between TMs 2 and 7, and are clamped together by SecE at the back. The channel is closed by both a pore ring composed of hydrophobic SecY resides and a short helix (helix 2A) on the extracellular side of the membrane which forms a plug. The plug probably moves laterally to allow the channel to open. The ring and the pore may move independently. This is Protein translocase subunit SecY from Streptomyces scabiei.